The chain runs to 236 residues: Urease accessory protein UreG (236 aa).

The disordered stretch occupies residues 1–26 (MHDHSLHSGHDHGLGPGSFHDRGAPH). 42–49 (GPVGSGKT) serves as a coordination point for GTP.

This sequence belongs to the SIMIBI class G3E GTPase family. UreG subfamily. Homodimer. UreD, UreF and UreG form a complex that acts as a GTP-hydrolysis-dependent molecular chaperone, activating the urease apoprotein by helping to assemble the nickel containing metallocenter of UreC. The UreE protein probably delivers the nickel.

It localises to the cytoplasm. Its function is as follows. Facilitates the functional incorporation of the urease nickel metallocenter. This process requires GTP hydrolysis, probably effectuated by UreG. In Anaeromyxobacter sp. (strain Fw109-5), this protein is Urease accessory protein UreG.